A 140-amino-acid polypeptide reads, in one-letter code: Large ribosomal subunit protein uL11 (140 aa).

This sequence belongs to the universal ribosomal protein uL11 family. In terms of assembly, part of the ribosomal stalk of the 50S ribosomal subunit. Interacts with L10 and the large rRNA to form the base of the stalk. L10 forms an elongated spine to which L12 dimers bind in a sequential fashion forming a multimeric L10(L12)X complex. One or more lysine residues are methylated.

Its function is as follows. Forms part of the ribosomal stalk which helps the ribosome interact with GTP-bound translation factors. This is Large ribosomal subunit protein uL11 from Nitratidesulfovibrio vulgaris (strain ATCC 29579 / DSM 644 / CCUG 34227 / NCIMB 8303 / VKM B-1760 / Hildenborough) (Desulfovibrio vulgaris).